A 313-amino-acid chain; its full sequence is NADH-ubiquinone oxidoreductase chain 1 (313 aa).

Transmembrane regions (helical) follow at residues 6 to 26 (LLSG…FTLL), 71 to 91 (VFPF…LWIL), 105 to 125 (MLLF…AGWF), 149 to 169 (MSLI…SMIM), 173 to 193 (FFVW…VSCV), 220 to 242 (GVGF…VLVI), 255 to 275 (FGMG…WVRA), and 293 to 313 (YLPS…ILNG).

Belongs to the complex I subunit 1 family.

It localises to the mitochondrion inner membrane. It carries out the reaction a ubiquinone + NADH + 5 H(+)(in) = a ubiquinol + NAD(+) + 4 H(+)(out). Core subunit of the mitochondrial membrane respiratory chain NADH dehydrogenase (Complex I) that is believed to belong to the minimal assembly required for catalysis. Complex I functions in the transfer of electrons from NADH to the respiratory chain. The immediate electron acceptor for the enzyme is believed to be ubiquinone. The polypeptide is NADH-ubiquinone oxidoreductase chain 1 (ND1) (Heterololigo bleekeri (Spear squid)).